A 932-amino-acid polypeptide reads, in one-letter code: UPF0182 protein Amet_0022 (932 aa).

7 helical membrane passes run 14–34, 60–80, 104–124, 166–186, 208–228, 256–276, and 286–306; these read VIIG…SEIL, LQIG…YLIG, ILIL…AGSL, TSIL…MFLI, LLQI…LVLA, VTLW…TGVV, and LLLI…VISL.

It belongs to the UPF0182 family.

The protein localises to the cell membrane. This Alkaliphilus metalliredigens (strain QYMF) protein is UPF0182 protein Amet_0022.